Here is an 80-residue protein sequence, read N- to C-terminus: NAD(P)H-quinone oxidoreductase subunit O (80 aa).

Belongs to the complex I NdhO subunit family. In terms of assembly, NDH-1 can be composed of about 15 different subunits; different subcomplexes with different compositions have been identified which probably have different functions.

Its subcellular location is the cellular thylakoid membrane. It catalyses the reaction a plastoquinone + NADH + (n+1) H(+)(in) = a plastoquinol + NAD(+) + n H(+)(out). The catalysed reaction is a plastoquinone + NADPH + (n+1) H(+)(in) = a plastoquinol + NADP(+) + n H(+)(out). Its function is as follows. NDH-1 shuttles electrons from an unknown electron donor, via FMN and iron-sulfur (Fe-S) centers, to quinones in the respiratory and/or the photosynthetic chain. The immediate electron acceptor for the enzyme in this species is believed to be plastoquinone. Couples the redox reaction to proton translocation, and thus conserves the redox energy in a proton gradient. Cyanobacterial NDH-1 also plays a role in inorganic carbon-concentration. In Prochlorococcus marinus subsp. pastoris (strain CCMP1986 / NIES-2087 / MED4), this protein is NAD(P)H-quinone oxidoreductase subunit O.